Here is a 101-residue protein sequence, read N- to C-terminus: Iron-sulfur cluster assembly protein CyaY (101 aa).

Belongs to the frataxin family.

Functionally, involved in iron-sulfur (Fe-S) cluster assembly. May act as a regulator of Fe-S biogenesis. This is Iron-sulfur cluster assembly protein CyaY from Actinobacillus pleuropneumoniae serotype 5b (strain L20).